A 462-amino-acid chain; its full sequence is Argininosuccinate lyase (462 aa).

This sequence belongs to the lyase 1 family. Argininosuccinate lyase subfamily.

Its subcellular location is the cytoplasm. It carries out the reaction 2-(N(omega)-L-arginino)succinate = fumarate + L-arginine. It participates in amino-acid biosynthesis; L-arginine biosynthesis; L-arginine from L-ornithine and carbamoyl phosphate: step 3/3. This chain is Argininosuccinate lyase, found in Thermus thermophilus (strain ATCC BAA-163 / DSM 7039 / HB27).